A 264-amino-acid chain; its full sequence is uncharacterized protein (264 aa).

A helical transmembrane segment spans residues L7 to T27.

Belongs to the staphylococcal tandem lipoprotein family.

The protein localises to the cell membrane. This is an uncharacterized protein from Staphylococcus aureus (strain N315).